Here is a 372-residue protein sequence, read N- to C-terminus: Chaperone protein DnaJ (372 aa).

The J domain occupies 5–70 (DFYEVLGVTK…QKRAAYDRYG (66 aa)). The segment at 129–207 (GKLASLTLPT…CGGAGRVTRE (79 aa)) adopts a CR-type zinc-finger fold. Residues Cys142, Cys145, Cys159, Cys162, Cys181, Cys184, Cys195, and Cys198 each coordinate Zn(2+). CXXCXGXG motif repeat units follow at residues 142–149 (CEACDGTG), 159–166 (CPTCGGQG), 181–188 (CPQCHGRG), and 195–202 (CQACGGAG).

Belongs to the DnaJ family. In terms of assembly, homodimer. Requires Zn(2+) as cofactor.

It is found in the cytoplasm. Its function is as follows. Participates actively in the response to hyperosmotic and heat shock by preventing the aggregation of stress-denatured proteins and by disaggregating proteins, also in an autonomous, DnaK-independent fashion. Unfolded proteins bind initially to DnaJ; upon interaction with the DnaJ-bound protein, DnaK hydrolyzes its bound ATP, resulting in the formation of a stable complex. GrpE releases ADP from DnaK; ATP binding to DnaK triggers the release of the substrate protein, thus completing the reaction cycle. Several rounds of ATP-dependent interactions between DnaJ, DnaK and GrpE are required for fully efficient folding. Also involved, together with DnaK and GrpE, in the DNA replication of plasmids through activation of initiation proteins. In Beijerinckia indica subsp. indica (strain ATCC 9039 / DSM 1715 / NCIMB 8712), this protein is Chaperone protein DnaJ.